Reading from the N-terminus, the 829-residue chain is Periplasmic nitrate reductase (829 aa).

The segment at residues M1–A29 is a signal peptide (tat-type signal). The region spanning I41–D97 is the 4Fe-4S Mo/W bis-MGD-type domain. [4Fe-4S] cluster is bound by residues C48, C51, C55, and C83. Residues K85, Q152, N177, C181, W214–M221, S245–H249, Q264–D266, M374, Q378, N484, S510–D511, K533, D560, and T718–T727 contribute to the Mo-bis(molybdopterin guanine dinucleotide) site. F794 is a substrate binding site. 2 residues coordinate Mo-bis(molybdopterin guanine dinucleotide): N802 and K819.

The protein belongs to the prokaryotic molybdopterin-containing oxidoreductase family. NasA/NapA/NarB subfamily. As to quaternary structure, component of the periplasmic nitrate reductase NapAB complex composed of NapA and NapB. [4Fe-4S] cluster serves as cofactor. The cofactor is Mo-bis(molybdopterin guanine dinucleotide). Post-translationally, predicted to be exported by the Tat system. The position of the signal peptide cleavage has not been experimentally proven.

Its subcellular location is the periplasm. The enzyme catalyses 2 Fe(II)-[cytochrome] + nitrate + 2 H(+) = 2 Fe(III)-[cytochrome] + nitrite + H2O. Catalytic subunit of the periplasmic nitrate reductase complex NapAB. Receives electrons from NapB and catalyzes the reduction of nitrate to nitrite. This chain is Periplasmic nitrate reductase, found in Aliivibrio fischeri (strain ATCC 700601 / ES114) (Vibrio fischeri).